The primary structure comprises 183 residues: UPF0302 protein BH1670 (183 aa).

It belongs to the UPF0302 family.

The protein is UPF0302 protein BH1670 of Halalkalibacterium halodurans (strain ATCC BAA-125 / DSM 18197 / FERM 7344 / JCM 9153 / C-125) (Bacillus halodurans).